Consider the following 485-residue polypeptide: Ribosomal protein uS12 methylthiotransferase RimO (485 aa).

Residues 37–147 enclose the MTTase N-terminal domain; it reads SRIGFVSLGC…VVEQVHEHLP (111 aa). [4Fe-4S] cluster-binding residues include Cys46, Cys82, Cys111, Cys179, Cys183, and Cys186. Residues 165–402 form the Radical SAM core domain; sequence LTPRHYAYLK…MEVQGEISAA (238 aa). Residues 405–471 enclose the TRAM domain; it reads KARIGNEYQV…EHDVWAVLSE (67 aa).

It belongs to the methylthiotransferase family. RimO subfamily. [4Fe-4S] cluster is required as a cofactor.

It is found in the cytoplasm. It carries out the reaction L-aspartate(89)-[ribosomal protein uS12]-hydrogen + (sulfur carrier)-SH + AH2 + 2 S-adenosyl-L-methionine = 3-methylsulfanyl-L-aspartate(89)-[ribosomal protein uS12]-hydrogen + (sulfur carrier)-H + 5'-deoxyadenosine + L-methionine + A + S-adenosyl-L-homocysteine + 2 H(+). Functionally, catalyzes the methylthiolation of an aspartic acid residue of ribosomal protein uS12. This chain is Ribosomal protein uS12 methylthiotransferase RimO, found in Alteromonas mediterranea (strain DSM 17117 / CIP 110805 / LMG 28347 / Deep ecotype).